Here is a 302-residue protein sequence, read N- to C-terminus: Recombination-associated protein RdgC (302 aa).

Belongs to the RdgC family.

The protein localises to the cytoplasm. Its subcellular location is the nucleoid. Its function is as follows. May be involved in recombination. The protein is Recombination-associated protein RdgC of Mannheimia succiniciproducens (strain KCTC 0769BP / MBEL55E).